A 358-amino-acid chain; its full sequence is MESAAVSAAPDATLDPPLEQLRHLAGELRQLLPGVRVGEAQETTKEFDREAFWRRFNEAAVTVSREATTLTVAFSRLPLPSPQETQRFCEQVHAAIKAIIGVYYLFPKDQGITLRKLVRSATLDIVDDMAQLVEALYINPAQSSPENLISYNSVWDACQHVPQIPKDNKAAALSVLTKSVDLVKDAHEEMEQAVEECDPYCGLLNDIEEDSSDNHVDEDILGCPNNRDSYWSEEDQELIIPCLALARASKACLKKIRLSVAENGKKDQVAQLDDIVDISDEISPSVDDLALSIYPPVCPLTVRINSAKLASVLKKALEITKASHVTPQPEDSWIPLLINAVDHCMNRIKELTQNEVES.

Interaction with TCF3 regions lie at residues 1–183 and 149–358; these read MESA…VDLV and ISYN…EVES. 2 interaction with RPLP0 regions span residues 1 to 189 and 238 to 358; these read MESA…AHEE and LIIP…EVES. The segment at 1 to 207 is required for interaction with CCND1; the sequence is MESAAVSAAP…DPYCGLLNDI (207 aa).

Belongs to the CCNDBP1 family. Interacts with CCND1 and GRAP2. May also interact with COPS5, RPLP0, SIRT6, SYF2 and TCF3. Phosphorylated.

Its subcellular location is the cytoplasm. The protein resides in the nucleus. May negatively regulate cell cycle progression. May act at least in part via inhibition of the cyclin-D1/CDK4 complex, thereby preventing phosphorylation of RB1 and blocking E2F-dependent transcription. The polypeptide is Cyclin-D1-binding protein 1 (CCNDBP1) (Bos taurus (Bovine)).